We begin with the raw amino-acid sequence, 567 residues long: Dihydrolipoyl dehydrogenase 2, chloroplastic (567 aa).

Residues 1–67 constitute a chloroplast transit peptide; sequence MQSVLSLSFS…HIQSRRIEVS (67 aa). Residues 114-122, K131, G197, and 221-223 contribute to the FAD site; these read EGDVVGGTC and TGS. C122 and C127 form a disulfide bridge. NAD(+) is bound by residues 258-265, E281, and G354; that span reads GSGYIGLE. FAD-binding positions include D400 and 406–409; that span reads MLAH. The active-site Proton acceptor is H536.

It belongs to the class-I pyridine nucleotide-disulfide oxidoreductase family. In terms of assembly, homodimer. Part of the plastidial pyruvate dehydrogenase complex (PDC) containing multiple copies of three enzymatic components: pyruvate dehydrogenase (E1), dihydrolipoamide acetyltransferase (E2) and lipoamide dehydrogenase (E3). It depends on FAD as a cofactor. Expressed mainly in flower buds and immature siliques, and to a lesser extent in flowers.

The protein localises to the plastid. The protein resides in the chloroplast stroma. It catalyses the reaction N(6)-[(R)-dihydrolipoyl]-L-lysyl-[protein] + NAD(+) = N(6)-[(R)-lipoyl]-L-lysyl-[protein] + NADH + H(+). Functionally, lipoamide dehydrogenase is a component of the plastidial pyruvate dehydrogenase complex (PDC). This is Dihydrolipoyl dehydrogenase 2, chloroplastic (LPD2) from Arabidopsis thaliana (Mouse-ear cress).